The primary structure comprises 882 residues: MNAPAKFSTSQIRSDFLAFFEGKGHTIVPSAPLVPGNDPTLLFTNSGMVQFKDVFLGAEKRSYVRAADVQRCLRAGGKHNDLDSVGYTARHHTFFEMLGNWSFGDYFKKDAIAWAWELLTQVWKLPADRLLVTVYHTDEEAFELWRDMIGIPESRIVRIGDNKGAPYASDNFWQMADTGPCGPCTEIFFDHGDHIAGGPPGSPDEDGDRFIEIWNLVFMQFDRQPDGTLVPLPAPCVDTGMGLERLAAILQHVHTNYEIDVFQALIGKASALTGIADLENKSLRVIADHIRACSFLIVDGVLPSNEGRGYVLRRIIRRALRHGWMLGVRQLFFSKMVPTLVELMGEAYPELVVAQETVARALLAEEERFAETLDAGMKIFDDVASRSQEIIPGADAFRLYDTYGFPVDLTADIARERGMRVDMEGFEFAMERQRETARAAGKFGGGVALPADLVATMAPTVFLGYEAQDADALKVVALLKQGRPVDRAEAGDEVIVFTDRTPFYAESGGQVGDSGQLSGTDISIEVADTQKFAGQFHGHVGRIAEGTLKLGDVLSGGIDVQRRGKTILNHSATHLLHAALREVLGTHVQQKGSLVAPDRLRFDFSHFQPITAEELAVIERKVNAEVRTNHSVEVHNMAMQEALDFGAMALFGEKYGERVRVLKMGGYSTELCGGTHVSRTGDIGLFKITSEGGVSSGVRRIEAVTGQGALDYVAEEERRLGEAASLFGGNSTEIVDKVRALTDRQKRLERELESLKAKLASGATADLGASAVDVAGVKVIAVRLEGFDAKALREAMDRLKQQLGDSVIVLAGAAGGKVALVAGVNGSPTGKVKAGELLGHIASQIGGKGGGRPDLAQGGGEDGPALATALQGVPSWVKQHLG.

Zn(2+) contacts are provided by His570, His574, Cys672, and His676.

The protein belongs to the class-II aminoacyl-tRNA synthetase family. The cofactor is Zn(2+).

The protein resides in the cytoplasm. The catalysed reaction is tRNA(Ala) + L-alanine + ATP = L-alanyl-tRNA(Ala) + AMP + diphosphate. Its function is as follows. Catalyzes the attachment of alanine to tRNA(Ala) in a two-step reaction: alanine is first activated by ATP to form Ala-AMP and then transferred to the acceptor end of tRNA(Ala). Also edits incorrectly charged Ser-tRNA(Ala) and Gly-tRNA(Ala) via its editing domain. The protein is Alanine--tRNA ligase of Xanthomonas campestris pv. campestris (strain B100).